We begin with the raw amino-acid sequence, 191 residues long: Gamma-glutamylaminecyclotransferase B (191 aa).

Residue 7–10 (YGTL) coordinates substrate. The active-site Proton acceptor is Glu-82. Residues 155–178 (SADFSQNSEQEIKKNNSLQILTST) are compositionally biased toward polar residues. The segment at 155-191 (SADFSQNSEQEIKKNNSLQILTSTGDDHDVNFRGPLQ) is disordered.

It belongs to the gamma-glutamylcyclotransferase family.

It carries out the reaction epsilon-(gamma-L-glutamyl)-L-lysine = 5-oxo-L-proline + L-lysine. May contribute to degradation of proteins cross-linked by transglutaminases by degrading the cross-link between a lysine and a glutamic acid residue. Catalyzes the formation of 5-oxo-L-proline from L-gamma-glutamyl-L-epsilon-lysine. The polypeptide is Gamma-glutamylaminecyclotransferase B (ggact.2) (Danio rerio (Zebrafish)).